Consider the following 289-residue polypeptide: Acetyl-coenzyme A carboxylase carboxyl transferase subunit beta 2 (289 aa).

Residues 25–289 (VWTKCPSCDQ…TNTSIRLEVK (265 aa)) form the CoA carboxyltransferase N-terminal domain. Positions 29, 32, 48, and 51 each coordinate Zn(2+). The segment at 29 to 51 (CPSCDQVLYRIALKENLEVCPKC) adopts a C4-type zinc-finger fold.

The protein belongs to the AccD/PCCB family. As to quaternary structure, acetyl-CoA carboxylase is a heterohexamer composed of biotin carboxyl carrier protein (AccB), biotin carboxylase (AccC) and two subunits each of ACCase subunit alpha (AccA) and ACCase subunit beta (AccD). Zn(2+) serves as cofactor.

Its subcellular location is the cytoplasm. It catalyses the reaction N(6)-carboxybiotinyl-L-lysyl-[protein] + acetyl-CoA = N(6)-biotinyl-L-lysyl-[protein] + malonyl-CoA. The protein operates within lipid metabolism; malonyl-CoA biosynthesis; malonyl-CoA from acetyl-CoA: step 1/1. Component of the acetyl coenzyme A carboxylase (ACC) complex. Biotin carboxylase (BC) catalyzes the carboxylation of biotin on its carrier protein (BCCP) and then the CO(2) group is transferred by the transcarboxylase to acetyl-CoA to form malonyl-CoA. In Vibrio parahaemolyticus serotype O3:K6 (strain RIMD 2210633), this protein is Acetyl-coenzyme A carboxylase carboxyl transferase subunit beta 2.